A 172-amino-acid polypeptide reads, in one-letter code: Ribosome maturation factor RimM (172 aa).

The PRC barrel domain maps to 96–168 (EGEFYYHQII…RVDVELMEGL (73 aa)).

The protein belongs to the RimM family. In terms of assembly, binds ribosomal protein uS19.

The protein localises to the cytoplasm. In terms of biological role, an accessory protein needed during the final step in the assembly of 30S ribosomal subunit, possibly for assembly of the head region. Essential for efficient processing of 16S rRNA. May be needed both before and after RbfA during the maturation of 16S rRNA. It has affinity for free ribosomal 30S subunits but not for 70S ribosomes. This chain is Ribosome maturation factor RimM, found in Streptococcus pyogenes serotype M18 (strain MGAS8232).